The primary structure comprises 129 residues: Small ribosomal subunit protein uS9 (129 aa).

Belongs to the universal ribosomal protein uS9 family.

The polypeptide is Small ribosomal subunit protein uS9 (Helicobacter acinonychis (strain Sheeba)).